A 252-amino-acid polypeptide reads, in one-letter code: Type III pantothenate kinase (252 aa).

6–13 (DIGNTNIV) serves as a coordination point for ATP. Substrate is bound at residue 107 to 110 (GADL). The active-site Proton acceptor is Asp109. Asp129 is a K(+) binding site. Thr132 contacts ATP. Thr184 is a substrate binding site.

Belongs to the type III pantothenate kinase family. As to quaternary structure, homodimer. NH4(+) is required as a cofactor. K(+) serves as cofactor.

It localises to the cytoplasm. It carries out the reaction (R)-pantothenate + ATP = (R)-4'-phosphopantothenate + ADP + H(+). It functions in the pathway cofactor biosynthesis; coenzyme A biosynthesis; CoA from (R)-pantothenate: step 1/5. Its function is as follows. Catalyzes the phosphorylation of pantothenate (Pan), the first step in CoA biosynthesis. This chain is Type III pantothenate kinase, found in Bifidobacterium animalis subsp. lactis (strain AD011).